Reading from the N-terminus, the 226-residue chain is 2-C-methyl-D-erythritol 4-phosphate cytidylyltransferase (226 aa).

The protein belongs to the IspD/TarI cytidylyltransferase family. IspD subfamily.

The enzyme catalyses 2-C-methyl-D-erythritol 4-phosphate + CTP + H(+) = 4-CDP-2-C-methyl-D-erythritol + diphosphate. It functions in the pathway isoprenoid biosynthesis; isopentenyl diphosphate biosynthesis via DXP pathway; isopentenyl diphosphate from 1-deoxy-D-xylulose 5-phosphate: step 2/6. In terms of biological role, catalyzes the formation of 4-diphosphocytidyl-2-C-methyl-D-erythritol from CTP and 2-C-methyl-D-erythritol 4-phosphate (MEP). The chain is 2-C-methyl-D-erythritol 4-phosphate cytidylyltransferase from Bacillus mycoides (strain KBAB4) (Bacillus weihenstephanensis).